Here is a 496-residue protein sequence, read N- to C-terminus: Neuronal acetylcholine receptor subunit beta-4 (496 aa).

The first 19 residues, 1-19 (MRSALPLVLFSLVALCGRG), serve as a signal peptide directing secretion. The Extracellular portion of the chain corresponds to 20-236 (DCRVANAEEK…IIKRKPLFYT (217 aa)). N-linked (GlcNAc...) asparagine glycosylation is found at Asn-36, Asn-93, Asn-138, and Asn-166. Cys-153 and Cys-167 are joined by a disulfide. Residues 237–257 (INLIIPCVLITSLAILVFYLP) form a helical membrane-spanning segment. Topologically, residues 258–265 (SDCGEKMT) are cytoplasmic. A Na(+)-binding site is contributed by Glu-262. Residues 266 to 286 (LCISVLLALTVFLLLISKIVP) traverse the membrane as a helical segment. Residues 287-298 (PTSLNVPLIGKY) lie on the Extracellular side of the membrane. Residues 299–319 (LMFTMVLVTFSIVTSVCVLNV) traverse the membrane as a helical segment. Residues 320 to 464 (HHRSPSTHTM…WKYVAMVVDR (145 aa)) lie on the Cytoplasmic side of the membrane. Residues 465 to 485 (LFLWVFVVVCVLGTVGLFLPP) form a helical membrane-spanning segment. At 486-496 (LFQTHTPSEEP) the chain is on the extracellular side.

It belongs to the ligand-gated ion channel (TC 1.A.9) family. Acetylcholine receptor (TC 1.A.9.1) subfamily. Beta-4/CHRNB4 sub-subfamily. As to quaternary structure, neuronal AChR is composed of two different types of subunits: alpha and beta. CHRNB4/Beta-4 subunit can be combined to CHRNA2/alpha-2, CHRNA3/alpha-3 or CHRNA4/alpha-4, CHRNA5/alpha-5 and CHRNB3/beta-3 to give rise to functional receptors. Forms stoichiometries such as (CHRNA3)2:(CHRNB4)3 or (CHRNA3:CHRNB4)2:CHRNB3. Interacts with RIC3; which is required for proper folding and assembly. Interacts with LYPD6.

It localises to the synaptic cell membrane. The protein resides in the cell membrane. It catalyses the reaction Ca(2+)(in) = Ca(2+)(out). The enzyme catalyses K(+)(in) = K(+)(out). It carries out the reaction Na(+)(in) = Na(+)(out). Component of neuronal acetylcholine receptors (nAChRs) that function as pentameric, ligand-gated cation channels with high calcium permeability among other activities. nAChRs are excitatory neurotrasnmitter receptors formed by a collection of nAChR subunits known to mediate synaptic transmission in the nervous system and the neuromuscular junction. Each nAchR subunit confers differential attributes to channel properties, including activation, deactivation and desensitization kinetics, pH sensitivity, cation permeability, and binding to allosteric modulators. CHRNB4 forms heteropentameric neuronal acetylcholine receptors with CHRNA2, CHRNA3 and CHRNA4, as well as CHRNA5 and CHRNB3 as accesory subunits. CHRNA3:CHRNB4 being predominant in neurons of the autonomic ganglia, it is known as ganglionic nicotinic receptor. CHRNA3:CHRNB4 or CHRNA3:CHRNA5:CHRNB4 play also an important role in the habenulo-interpeduncular tract, modulating the mesolimbic dopamine system and affecting reward circuits and addiction. Hypothalamic CHRNA3:CHRNB4 nAChR activation by nicotine leads to activation of POMC neurons and a decrease in food intake. The chain is Neuronal acetylcholine receptor subunit beta-4 (CHRNB4) from Bos taurus (Bovine).